The chain runs to 463 residues: ATP-dependent protease ATPase subunit HslU (463 aa).

ATP contacts are provided by residues valine 21, 63-68 (GVGKTE), aspartate 276, glutamate 341, and arginine 413.

This sequence belongs to the ClpX chaperone family. HslU subfamily. In terms of assembly, a double ring-shaped homohexamer of HslV is capped on each side by a ring-shaped HslU homohexamer. The assembly of the HslU/HslV complex is dependent on binding of ATP.

It localises to the cytoplasm. Functionally, ATPase subunit of a proteasome-like degradation complex; this subunit has chaperone activity. The binding of ATP and its subsequent hydrolysis by HslU are essential for unfolding of protein substrates subsequently hydrolyzed by HslV. HslU recognizes the N-terminal part of its protein substrates and unfolds these before they are guided to HslV for hydrolysis. This Thermotoga sp. (strain RQ2) protein is ATP-dependent protease ATPase subunit HslU.